A 327-amino-acid chain; its full sequence is Interleukin-12 subunit beta (327 aa).

A signal peptide spans 1-22 (MCLQQLVISWVSLVWLASPLLA). The Ig-like C2-type domain maps to 23–106 (IWELEKNVYV…LSQMLLLLHK (84 aa)). A disulfide bond links cysteine 50 and cysteine 90. Asparagine 134 and asparagine 152 each carry an N-linked (GlcNAc...) asparagine glycan. The Fibronectin type-III domain maps to 237–327 (PPKNLKMKPS…WSEWATMSCP (91 aa)).

It belongs to the IL-12B family. As to quaternary structure, heterodimer with IL12A; disulfide-linked. The heterodimer is known as interleukin IL-12. Heterodimer with IL23A; disulfide-linked. The heterodimer is known as interleukin IL-23. Also secreted as a monomer. Interacts with NBR1; this interaction promotes IL-12 secretion.

It localises to the secreted. Cytokine that can act as a growth factor for activated T and NK cells, enhance the lytic activity of NK/lymphokine-activated killer cells, and stimulate the production of IFN-gamma by resting PBMC. Functionally, associates with IL23A to form the IL-23 interleukin, a heterodimeric cytokine which functions in innate and adaptive immunity. IL-23 may constitute with IL-17 an acute response to infection in peripheral tissues. IL-23 binds to a heterodimeric receptor complex composed of IL12RB1 and IL23R, activates the Jak-Stat signaling cascade, stimulates memory rather than naive T-cells and promotes production of pro-inflammatory cytokines. IL-23 induces autoimmune inflammation and thus may be responsible for autoimmune inflammatory diseases and may be important for tumorigenesis. The protein is Interleukin-12 subunit beta (IL12B) of Marmota monax (Woodchuck).